The primary structure comprises 306 residues: UDP-3-O-acyl-N-acetylglucosamine deacetylase (306 aa).

Zn(2+) is bound by residues histidine 79, histidine 238, and aspartate 242. Histidine 265 (proton donor) is an active-site residue.

This sequence belongs to the LpxC family. The cofactor is Zn(2+).

It carries out the reaction a UDP-3-O-[(3R)-3-hydroxyacyl]-N-acetyl-alpha-D-glucosamine + H2O = a UDP-3-O-[(3R)-3-hydroxyacyl]-alpha-D-glucosamine + acetate. The protein operates within glycolipid biosynthesis; lipid IV(A) biosynthesis; lipid IV(A) from (3R)-3-hydroxytetradecanoyl-[acyl-carrier-protein] and UDP-N-acetyl-alpha-D-glucosamine: step 2/6. Catalyzes the hydrolysis of UDP-3-O-myristoyl-N-acetylglucosamine to form UDP-3-O-myristoylglucosamine and acetate, the committed step in lipid A biosynthesis. The sequence is that of UDP-3-O-acyl-N-acetylglucosamine deacetylase from Shewanella denitrificans (strain OS217 / ATCC BAA-1090 / DSM 15013).